The primary structure comprises 76 residues: Conotoxin PnMKLT1-1111 (76 aa).

The first 22 residues, 1-22 (MKLTCMMIVAVLFLTAWTVVTA), serve as a signal peptide directing secretion. A propeptide spanning residues 23–50 (VPHSNKRLANLYLKARHEMKNPEASNVD) is cleaved from the precursor. Intrachain disulfides connect Cys53–Cys67, Cys60–Cys71, and Cys66–Cys75.

Belongs to the conotoxin O1 superfamily. As to expression, expressed by the venom duct.

The protein resides in the secreted. The chain is Conotoxin PnMKLT1-1111 from Conus pennaceus (Feathered cone).